Reading from the N-terminus, the 479-residue chain is Aspartyl/glutamyl-tRNA(Asn/Gln) amidotransferase subunit B (479 aa).

This sequence belongs to the GatB/GatE family. GatB subfamily. As to quaternary structure, heterotrimer of A, B and C subunits.

It catalyses the reaction L-glutamyl-tRNA(Gln) + L-glutamine + ATP + H2O = L-glutaminyl-tRNA(Gln) + L-glutamate + ADP + phosphate + H(+). The catalysed reaction is L-aspartyl-tRNA(Asn) + L-glutamine + ATP + H2O = L-asparaginyl-tRNA(Asn) + L-glutamate + ADP + phosphate + 2 H(+). Functionally, allows the formation of correctly charged Asn-tRNA(Asn) or Gln-tRNA(Gln) through the transamidation of misacylated Asp-tRNA(Asn) or Glu-tRNA(Gln) in organisms which lack either or both of asparaginyl-tRNA or glutaminyl-tRNA synthetases. The reaction takes place in the presence of glutamine and ATP through an activated phospho-Asp-tRNA(Asn) or phospho-Glu-tRNA(Gln). The chain is Aspartyl/glutamyl-tRNA(Asn/Gln) amidotransferase subunit B from Streptococcus pyogenes serotype M4 (strain MGAS10750).